The following is a 392-amino-acid chain: DNA-directed RNA polymerase subunit Rpo1C (392 aa).

It belongs to the RNA polymerase beta' chain family. Part of the RNA polymerase complex.

The protein resides in the cytoplasm. It catalyses the reaction RNA(n) + a ribonucleoside 5'-triphosphate = RNA(n+1) + diphosphate. Its function is as follows. DNA-dependent RNA polymerase (RNAP) catalyzes the transcription of DNA into RNA using the four ribonucleoside triphosphates as substrates. Forms part of the jaw domain. In Sulfurisphaera tokodaii (strain DSM 16993 / JCM 10545 / NBRC 100140 / 7) (Sulfolobus tokodaii), this protein is DNA-directed RNA polymerase subunit Rpo1C.